The chain runs to 358 residues: MKAALALEDGTYLEGKAFGAERGGLGEIVFCTSMTGYVEALTDPSYKGQILMMTYPLIGNYGVNREDFESDGVKVEGFVVKELCKNPSNWRSEMSVDELLKQYDVPGIEGVDTRMLTRKIRIYGSMKAAIGIGDVDREKLVRKAVEQPFISDIDLVDKVCVKEAKRFESDGDLEVVLVDCGVKMSIVRQLLKRGVNLTVVPYDFPAEKIKEMNPDGVFISNGPGDPARVKPTIETIRKLAGQIPMAGICLGHQLTALALGAKTFKLKFGHHGSNQPVKDFETGRVFISSQNHNFAVDTKTLPKEFEVTQINLNDHTVEGMVHKDFPLITVQYHPEAGPGPHDTYFFFDRYVDMLREYR.

The segment at 1–172 is CPSase; it reads MKAALALEDG…EAKRFESDGD (172 aa). L-glutamine contacts are provided by serine 45, glycine 222, and glycine 224. A Glutamine amidotransferase type-1 domain is found at 174–358; it reads EVVLVDCGVK…RYVDMLREYR (185 aa). The Nucleophile role is filled by cysteine 249. L-glutamine-binding residues include leucine 250, glutamine 253, asparagine 291, and phenylalanine 294. Active-site residues include histidine 333 and glutamate 335.

It belongs to the CarA family. In terms of assembly, composed of two chains; the small (or glutamine) chain promotes the hydrolysis of glutamine to ammonia, which is used by the large (or ammonia) chain to synthesize carbamoyl phosphate. Tetramer of heterodimers (alpha,beta)4.

It catalyses the reaction hydrogencarbonate + L-glutamine + 2 ATP + H2O = carbamoyl phosphate + L-glutamate + 2 ADP + phosphate + 2 H(+). It carries out the reaction L-glutamine + H2O = L-glutamate + NH4(+). The protein operates within amino-acid biosynthesis; L-arginine biosynthesis; carbamoyl phosphate from bicarbonate: step 1/1. It functions in the pathway pyrimidine metabolism; UMP biosynthesis via de novo pathway; (S)-dihydroorotate from bicarbonate: step 1/3. Its function is as follows. Small subunit of the glutamine-dependent carbamoyl phosphate synthetase (CPSase). CPSase catalyzes the formation of carbamoyl phosphate from the ammonia moiety of glutamine, carbonate, and phosphate donated by ATP, constituting the first step of 2 biosynthetic pathways, one leading to arginine and/or urea and the other to pyrimidine nucleotides. The small subunit (glutamine amidotransferase) binds and cleaves glutamine to supply the large subunit with the substrate ammonia. This chain is Carbamoyl phosphate synthase small chain, found in Archaeoglobus fulgidus (strain ATCC 49558 / DSM 4304 / JCM 9628 / NBRC 100126 / VC-16).